Consider the following 96-residue polypeptide: Cytochrome c-553 (96 aa).

The N-terminal stretch at 1–19 is a signal peptide; it reads MKKVIMALGVLAFANALMA. C29, C32, H33, and M73 together coordinate heme c.

The protein belongs to the cytochrome c family. Post-translationally, binds 1 heme c group covalently per subunit.

It is found in the periplasm. Natural electron acceptor for a formate dehydrogenase. This is Cytochrome c-553 from Helicobacter pylori (strain ATCC 700392 / 26695) (Campylobacter pylori).